Consider the following 431-residue polypeptide: Glutamyl-tRNA(Gln) amidotransferase subunit A (431 aa).

Active-site charge relay system residues include K55 and S130. The active-site Acyl-ester intermediate is the S154.

The protein belongs to the amidase family. GatA subfamily. In terms of assembly, heterotrimer of A, B and C subunits.

It carries out the reaction L-glutamyl-tRNA(Gln) + L-glutamine + ATP + H2O = L-glutaminyl-tRNA(Gln) + L-glutamate + ADP + phosphate + H(+). Functionally, allows the formation of correctly charged Gln-tRNA(Gln) through the transamidation of misacylated Glu-tRNA(Gln) in organisms which lack glutaminyl-tRNA synthetase. The reaction takes place in the presence of glutamine and ATP through an activated gamma-phospho-Glu-tRNA(Gln). The polypeptide is Glutamyl-tRNA(Gln) amidotransferase subunit A (Methanococcus maripaludis (strain DSM 14266 / JCM 13030 / NBRC 101832 / S2 / LL)).